A 310-amino-acid chain; its full sequence is Cytochrome f (310 aa).

Residues 1 to 27 (MRRILTFFLGSIIIGLSIIISPSSSFA) form the signal peptide. Heme contacts are provided by Y28, C48, C51, and H52. The chain crosses the membrane as a helical span at residues 277–297 (VIGLIAFFAGVALTQILLVLK).

Belongs to the cytochrome f family. As to quaternary structure, the 4 large subunits of the cytochrome b6-f complex are cytochrome b6, subunit IV (17 kDa polypeptide, PetD), cytochrome f and the Rieske protein, while the 4 small subunits are PetG, PetL, PetM and PetN. The complex functions as a dimer. Requires heme as cofactor.

The protein localises to the cellular thylakoid membrane. Component of the cytochrome b6-f complex, which mediates electron transfer between photosystem II (PSII) and photosystem I (PSI), cyclic electron flow around PSI, and state transitions. In Prochlorococcus marinus (strain SARG / CCMP1375 / SS120), this protein is Cytochrome f.